The primary structure comprises 312 residues: Malate dehydrogenase (312 aa).

Residues 7–13 (GAAGGIG) and aspartate 34 each bind NAD(+). Substrate contacts are provided by arginine 81 and arginine 87. NAD(+) contacts are provided by residues asparagine 94 and 117–119 (ITN). The substrate site is built by asparagine 119 and arginine 153. Histidine 177 serves as the catalytic Proton acceptor. Residue methionine 227 coordinates NAD(+).

Belongs to the LDH/MDH superfamily. MDH type 1 family. In terms of assembly, homodimer.

The catalysed reaction is (S)-malate + NAD(+) = oxaloacetate + NADH + H(+). Functionally, catalyzes the reversible oxidation of malate to oxaloacetate. The polypeptide is Malate dehydrogenase (Escherichia coli O6:K15:H31 (strain 536 / UPEC)).